Reading from the N-terminus, the 173-residue chain is RNA pyrophosphohydrolase (173 aa).

Residues 6–149 form the Nudix hydrolase domain; the sequence is GFRANVGIIL…KRSVYRRALQ (144 aa). A Nudix box motif is present at residues 38-59; that stretch reads GGIDRGETPMDAMYRELWEEVG.

Belongs to the Nudix hydrolase family. RppH subfamily. The cofactor is a divalent metal cation.

Its function is as follows. Accelerates the degradation of transcripts by removing pyrophosphate from the 5'-end of triphosphorylated RNA, leading to a more labile monophosphorylated state that can stimulate subsequent ribonuclease cleavage. The protein is RNA pyrophosphohydrolase of Psychrobacter cryohalolentis (strain ATCC BAA-1226 / DSM 17306 / VKM B-2378 / K5).